The following is a 506-amino-acid chain: ATP synthase subunit alpha (506 aa).

Residue 169–176 (GDRQTGKT) participates in ATP binding.

Belongs to the ATPase alpha/beta chains family. As to quaternary structure, F-type ATPases have 2 components, CF(1) - the catalytic core - and CF(0) - the membrane proton channel. CF(1) has five subunits: alpha(3), beta(3), gamma(1), delta(1), epsilon(1). CF(0) has three main subunits: a(1), b(2) and c(9-12). The alpha and beta chains form an alternating ring which encloses part of the gamma chain. CF(1) is attached to CF(0) by a central stalk formed by the gamma and epsilon chains, while a peripheral stalk is formed by the delta and b chains.

The protein resides in the cell membrane. It carries out the reaction ATP + H2O + 4 H(+)(in) = ADP + phosphate + 5 H(+)(out). Its function is as follows. Produces ATP from ADP in the presence of a proton gradient across the membrane. The alpha chain is a regulatory subunit. This is ATP synthase subunit alpha from Lawsonia intracellularis (strain PHE/MN1-00).